Consider the following 253-residue polypeptide: Cyclin-C1-2 (253 aa).

This sequence belongs to the cyclin family. Cyclin C subfamily.

The protein is Cyclin-C1-2 (CYCC1-2) of Arabidopsis thaliana (Mouse-ear cress).